The primary structure comprises 511 residues: Maturase K (511 aa).

This sequence belongs to the intron maturase 2 family. MatK subfamily.

It localises to the plastid. It is found in the chloroplast. Functionally, usually encoded in the trnK tRNA gene intron. Probably assists in splicing its own and other chloroplast group II introns. This chain is Maturase K, found in Lolium perenne (Perennial ryegrass).